Here is a 1256-residue protein sequence, read N- to C-terminus: Bifunctional autolysin (1256 aa).

Positions 1–29 (MAKKFNYKLPSMVALTLVGSAVTAHQVQA) are cleaved as a signal peptide. The span at 103–138 (GDTRANQSATTNNTQPVAKSTSTTAPKTNTNVTNAG) shows a compositional bias: polar residues. Disordered stretches follow at residues 103-151 (GDTR…NSEN), 172-219 (KTAA…KYKP), and 419-440 (TQST…PSTG). Low complexity-rich tracts occupy residues 172–196 (KTAA…KVTT) and 421–439 (STTT…KPST). Residues 199–775 (ASAQPRSVAA…AVAQPKTAVK (577 aa)) are N-acetylmuramoyl-L-alanine amidase. GW domains are found at residues 443 to 517 (TVAA…YNTA), 519 to 593 (SPVN…DTAK), 612 to 686 (TVSS…YNNA), 688 to 762 (SPVN…VPAA), 784 to 859 (TTQT…VQNL), 861 to 936 (KEVK…APTA), and 943 to 1017 (AAKD…KELI). An endo-beta-N-acetylglucosaminidase region spans residues 776-1256 (AYTVTKPQTT…GKYFDIPQYK (481 aa)).

The protein in the N-terminal section; belongs to the N-acetylmuramoyl-L-alanine amidase 2 family. It in the C-terminal section; belongs to the glycosyl hydrolase 73 family. Oligomer; forms a ring structure at the cell surface which is important for efficient partitioning of daughter cells after cell division. Post-translationally, undergoes proteolytic processing to generate the two extracellular lytic enzymes, probably at the septal region on the cell surface.

It is found in the secreted. It carries out the reaction Hydrolyzes the link between N-acetylmuramoyl residues and L-amino acid residues in certain cell-wall glycopeptides.. The enzyme catalyses an N(4)-(oligosaccharide-(1-&gt;3)-[oligosaccharide-(1-&gt;6)]-beta-D-Man-(1-&gt;4)-beta-D-GlcNAc-(1-&gt;4)-alpha-D-GlcNAc)-L-asparaginyl-[protein] + H2O = an oligosaccharide-(1-&gt;3)-[oligosaccharide-(1-&gt;6)]-beta-D-Man-(1-&gt;4)-D-GlcNAc + N(4)-(N-acetyl-beta-D-glucosaminyl)-L-asparaginyl-[protein]. Functionally, endohydrolysis of the di-N-acetylchitobiosyl unit in high-mannose glycopeptides and glycoproteins containing the -[(Man)5(GlcNAc)2]-Asn structure. One N-acetyl-D-glucosamine residue remains attached to the protein; the rest of the oligosaccharide is released intact. Cleaves the peptidoglycan connecting the daughter cells at the end of the cell division cycle, resulting in the separation of the two newly divided cells. Acts as an autolysin in penicillin-induced lysis. This Staphylococcus aureus (strain COL) protein is Bifunctional autolysin (atl).